The chain runs to 473 residues: RWLGWQKFCWISCLFSSISSGLDPGEQAKVTTALDTAQFAINAINEEYIAQAKAIEEALKVSTQARSADLLRRQTELAKFGSKVGKALKAVQAASAIASFVFTFFMPSELDVITSLINERFNEVNAKLDRIDEKLDEMEKSIKADTAFNVFLSAWIKWEYKVRNGAKKLSDIRKAMGTKTQRIDQVKLAEEYVKYYETNNLDGNVLSLYRMAALPESITQRNIFDRFIAQFGCDITKLSELMILVQNIMTSAGQQKLTYYYFKGDQSRANSSFKDIQMYFFKIRQGFDDRVWHCRRNSLDYAKRDANKILKNMRGSSRESIVRAIFNELKVKYPWYTWAVAAVKSDRPRIRGLELRGSTYFRLEDRSDAKKVKGYFVVYEDTRSSASCSDITQAKTLLVFKKCDGCNSDYIYAADNILSKKRCGESTLERLVDFKQQCPVCHRWPYSITCYCANRVKQDSQNMGLYCISSQHH.

The first 21 residues, 1-21, serve as a signal peptide directing secretion; the sequence is RWLGWQKFCWISCLFSSISSG. Coiled-coil stretches lie at residues 40–60 and 116–147; these read AINA…EALK and LINE…ADTA.

Component of the acid-insoluble and acid-soluble organic matrix of the aragonitic skeleton (at protein level).

Its subcellular location is the secreted. In Acropora millepora (Staghorn coral), this protein is Cephalotoxin-like protein.